The chain runs to 535 residues: CTP synthase (535 aa).

The interval 1-268 (MPNKYIVVTG…VSKILSRLKL (268 aa)) is amidoligase domain. Ser-14 contacts CTP. Position 14 (Ser-14) interacts with UTP. 15-20 (SVGKGT) serves as a coordination point for ATP. Tyr-55 is a binding site for L-glutamine. Position 72 (Asp-72) interacts with ATP. Mg(2+) contacts are provided by Asp-72 and Glu-142. CTP is bound by residues 149 to 151 (DIE), 189 to 194 (KTKPLQ), and Lys-225. Residues 189 to 194 (KTKPLQ) and Lys-225 contribute to the UTP site. Val-243 provides a ligand contact to ATP. The Glutamine amidotransferase type-1 domain occupies 302–535 (YTKLKDSYIS…LGFIRAVASL (234 aa)). L-glutamine is bound at residue Gly-359. Cys-386 serves as the catalytic Nucleophile; for glutamine hydrolysis. L-glutamine-binding positions include 387–390 (FGFQ), Glu-410, and Arg-467. Active-site residues include His-511 and Glu-513.

Belongs to the CTP synthase family. Homotetramer in the presence of ATP and UTP. The enzyme dissociates into homodimers in the absence of substrate nucleotides.

The catalysed reaction is UTP + L-glutamine + ATP + H2O = CTP + L-glutamate + ADP + phosphate + 2 H(+). It carries out the reaction L-glutamine + H2O = L-glutamate + NH4(+). It catalyses the reaction UTP + NH4(+) + ATP = CTP + ADP + phosphate + 2 H(+). It functions in the pathway pyrimidine metabolism; CTP biosynthesis via de novo pathway; CTP from UDP: step 2/2. Its activity is regulated as follows. Allosterically activated by GTP, when glutamine is the substrate; GTP has no effect on the reaction when ammonia is the substrate. The allosteric effector GTP functions by stabilizing the protein conformation that binds the tetrahedral intermediate(s) formed during glutamine hydrolysis. Inhibited by the product CTP, via allosteric rather than competitive inhibition. Catalyzes the ATP-dependent amination of UTP to CTP with either L-glutamine or ammonia as the source of nitrogen. Regulates intracellular CTP levels through interactions with the four ribonucleotide triphosphates. This Saccharolobus solfataricus (strain ATCC 35092 / DSM 1617 / JCM 11322 / P2) (Sulfolobus solfataricus) protein is CTP synthase.